We begin with the raw amino-acid sequence, 194 residues long: NAD(P)H:quinone oxidoreductase (194 aa).

The protein belongs to the SsuE family. In terms of assembly, homotetramer. Requires FMN as cofactor.

The catalysed reaction is a quinone + NADH + H(+) = a quinol + NAD(+). It carries out the reaction a quinone + NADPH + H(+) = a quinol + NADP(+). Functionally, the enzyme apparently serves as a quinone reductase in connection with conjugation reactions of hydroquinones involved in detoxification pathways. This Solanum tuberosum (Potato) protein is NAD(P)H:quinone oxidoreductase.